The sequence spans 404 residues: Cysteine desulfurase IscS (404 aa).

Residues 75 to 76 (AT), N155, Q183, and 203 to 205 (SSH) each bind pyridoxal 5'-phosphate. K206 carries the post-translational modification N6-(pyridoxal phosphate)lysine. T243 lines the pyridoxal 5'-phosphate pocket. Catalysis depends on C328, which acts as the Cysteine persulfide intermediate. Residue C328 coordinates [2Fe-2S] cluster.

This sequence belongs to the class-V pyridoxal-phosphate-dependent aminotransferase family. NifS/IscS subfamily. As to quaternary structure, homodimer. Forms a heterotetramer with IscU, interacts with other sulfur acceptors. Pyridoxal 5'-phosphate serves as cofactor.

Its subcellular location is the cytoplasm. The enzyme catalyses (sulfur carrier)-H + L-cysteine = (sulfur carrier)-SH + L-alanine. The protein operates within cofactor biosynthesis; iron-sulfur cluster biosynthesis. Its function is as follows. Master enzyme that delivers sulfur to a number of partners involved in Fe-S cluster assembly, tRNA modification or cofactor biosynthesis. Catalyzes the removal of elemental sulfur atoms from cysteine to produce alanine. Functions as a sulfur delivery protein for Fe-S cluster synthesis onto IscU, an Fe-S scaffold assembly protein, as well as other S acceptor proteins. This is Cysteine desulfurase IscS from Haemophilus influenzae (strain PittGG).